The sequence spans 336 residues: Biotin synthase (336 aa).

The 228-residue stretch at 54–281 (NAIQLSTLLS…KAMVRLSAGR (228 aa)) folds into the Radical SAM core domain. Residues cysteine 69, cysteine 73, and cysteine 76 each contribute to the [4Fe-4S] cluster site. Residues cysteine 113, cysteine 144, cysteine 204, and arginine 276 each contribute to the [2Fe-2S] cluster site.

The protein belongs to the radical SAM superfamily. Biotin synthase family. Homodimer. The cofactor is [4Fe-4S] cluster. It depends on [2Fe-2S] cluster as a cofactor.

It catalyses the reaction (4R,5S)-dethiobiotin + (sulfur carrier)-SH + 2 reduced [2Fe-2S]-[ferredoxin] + 2 S-adenosyl-L-methionine = (sulfur carrier)-H + biotin + 2 5'-deoxyadenosine + 2 L-methionine + 2 oxidized [2Fe-2S]-[ferredoxin]. Its pathway is cofactor biosynthesis; biotin biosynthesis; biotin from 7,8-diaminononanoate: step 2/2. Catalyzes the conversion of dethiobiotin (DTB) to biotin by the insertion of a sulfur atom into dethiobiotin via a radical-based mechanism. The protein is Biotin synthase of Burkholderia pseudomallei (strain 1710b).